The primary structure comprises 403 residues: CCA-adding enzyme (403 aa).

Gly-32 and Arg-35 together coordinate ATP. CTP is bound by residues Gly-32 and Arg-35. 2 residues coordinate Mg(2+): Asp-45 and Asp-47. ATP-binding residues include Arg-116, Asp-159, Arg-162, Arg-165, and Arg-168. The CTP site is built by Arg-116, Asp-159, Arg-162, Arg-165, and Arg-168.

The protein belongs to the tRNA nucleotidyltransferase/poly(A) polymerase family. Bacterial CCA-adding enzyme type 3 subfamily. As to quaternary structure, homodimer. Mg(2+) is required as a cofactor.

The catalysed reaction is a tRNA precursor + 2 CTP + ATP = a tRNA with a 3' CCA end + 3 diphosphate. It catalyses the reaction a tRNA with a 3' CCA end + 2 CTP + ATP = a tRNA with a 3' CCACCA end + 3 diphosphate. In terms of biological role, catalyzes the addition and repair of the essential 3'-terminal CCA sequence in tRNAs without using a nucleic acid template. Adds these three nucleotides in the order of C, C, and A to the tRNA nucleotide-73, using CTP and ATP as substrates and producing inorganic pyrophosphate. tRNA 3'-terminal CCA addition is required both for tRNA processing and repair. Also involved in tRNA surveillance by mediating tandem CCA addition to generate a CCACCA at the 3' terminus of unstable tRNAs. While stable tRNAs receive only 3'-terminal CCA, unstable tRNAs are marked with CCACCA and rapidly degraded. The chain is CCA-adding enzyme from Streptococcus uberis (strain ATCC BAA-854 / 0140J).